The chain runs to 323 residues: Methionyl-tRNA formyltransferase (323 aa).

113 to 116 provides a ligand contact to (6S)-5,6,7,8-tetrahydrofolate; that stretch reads SLLP.

This sequence belongs to the Fmt family.

The catalysed reaction is L-methionyl-tRNA(fMet) + (6R)-10-formyltetrahydrofolate = N-formyl-L-methionyl-tRNA(fMet) + (6S)-5,6,7,8-tetrahydrofolate + H(+). Functionally, attaches a formyl group to the free amino group of methionyl-tRNA(fMet). The formyl group appears to play a dual role in the initiator identity of N-formylmethionyl-tRNA by promoting its recognition by IF2 and preventing the misappropriation of this tRNA by the elongation apparatus. This Porphyromonas gingivalis (strain ATCC 33277 / DSM 20709 / CIP 103683 / JCM 12257 / NCTC 11834 / 2561) protein is Methionyl-tRNA formyltransferase.